A 471-amino-acid polypeptide reads, in one-letter code: GTPase Der (471 aa).

EngA-type G domains follow at residues 3 to 166 and 177 to 350; these read PTLA…EPEA and IKLA…SSAT. GTP contacts are provided by residues 9 to 16, 56 to 60, 118 to 121, 183 to 190, 230 to 234, and 295 to 298; these read GRPNVGKS, DTGGI, NKVD, DTAGV, and NKWD. The 85-residue stretch at 351 to 435 folds into the KH-like domain; the sequence is EKLNTNFLTK…PIRFEFKSSE (85 aa). A disordered region spans residues 432 to 471; that stretch reads KSSENPFAGRKNAMSKKPEHPSRRANSGGKSINRRPRPKS.

Belongs to the TRAFAC class TrmE-Era-EngA-EngB-Septin-like GTPase superfamily. EngA (Der) GTPase family. In terms of assembly, associates with the 50S ribosomal subunit.

In terms of biological role, GTPase that plays an essential role in the late steps of ribosome biogenesis. The sequence is that of GTPase Der from Saccharophagus degradans (strain 2-40 / ATCC 43961 / DSM 17024).